The chain runs to 47 residues: Exoenzymes regulatory protein AepH (47 aa).

2 stretches are compositionally biased toward basic and acidic residues: residues 1 to 17 and 33 to 47; these read MGQEPKGIESRKIQDGH and TKKEKFSRMSRDANV. Residues 1 to 47 form a disordered region; that stretch reads MGQEPKGIESRKIQDGHVRKKVGRQQGLWVRTTKKEKFSRMSRDANV.

Involved in the control of extracellular enzymes production. Stimulates PEL, PEH, CEL, and PRT production. The protein is Exoenzymes regulatory protein AepH (aepH) of Pectobacterium carotovorum subsp. carotovorum (Erwinia carotovora subsp. carotovora).